A 430-amino-acid polypeptide reads, in one-letter code: Histidinol dehydrogenase (430 aa).

The NAD(+) site is built by Tyr-130, Gln-191, and Asn-214. The substrate site is built by Ser-237, Gln-259, and His-262. 2 residues coordinate Zn(2+): Gln-259 and His-262. Catalysis depends on proton acceptor residues Glu-327 and His-328. 4 residues coordinate substrate: His-328, Asp-361, Glu-415, and His-420. Asp-361 is a binding site for Zn(2+). His-420 is a binding site for Zn(2+).

This sequence belongs to the histidinol dehydrogenase family. Zn(2+) is required as a cofactor.

The catalysed reaction is L-histidinol + 2 NAD(+) + H2O = L-histidine + 2 NADH + 3 H(+). Its pathway is amino-acid biosynthesis; L-histidine biosynthesis; L-histidine from 5-phospho-alpha-D-ribose 1-diphosphate: step 9/9. Catalyzes the sequential NAD-dependent oxidations of L-histidinol to L-histidinaldehyde and then to L-histidine. The protein is Histidinol dehydrogenase of Brucella melitensis biotype 1 (strain ATCC 23456 / CCUG 17765 / NCTC 10094 / 16M).